An 88-amino-acid chain; its full sequence is U-scoloptoxin(12)-Sa1a (88 aa).

An N-terminal signal peptide occupies residues 1 to 20 (MKYMIITVVILFTCALKMFC).

The protein belongs to the scoloptoxin-12 family. Post-translationally, contains 3 disulfide bonds. As to expression, expressed by the venom gland.

Its subcellular location is the secreted. The sequence is that of U-scoloptoxin(12)-Sa1a from Scolopendra alternans (Florida Keys giant centipede).